A 152-amino-acid polypeptide reads, in one-letter code: Lipoprotein signal peptidase (152 aa).

Transmembrane regions (helical) follow at residues 33–53 (VVPP…FGLL), 58–78 (MLFV…YFKI), and 83–102 (PVLD…NLAD). Catalysis depends on residues D111 and D125. A helical transmembrane segment spans residues 120–140 (VFNLADTAIVTGAFLLAWALL).

It belongs to the peptidase A8 family.

It localises to the cell membrane. The enzyme catalyses Release of signal peptides from bacterial membrane prolipoproteins. Hydrolyzes -Xaa-Yaa-Zaa-|-(S,diacylglyceryl)Cys-, in which Xaa is hydrophobic (preferably Leu), and Yaa (Ala or Ser) and Zaa (Gly or Ala) have small, neutral side chains.. It participates in protein modification; lipoprotein biosynthesis (signal peptide cleavage). In terms of biological role, this protein specifically catalyzes the removal of signal peptides from prolipoproteins. The polypeptide is Lipoprotein signal peptidase (Pelotomaculum thermopropionicum (strain DSM 13744 / JCM 10971 / SI)).